Consider the following 198-residue polypeptide: NAD(P)H dehydrogenase (quinone) (198 aa).

A Flavodoxin-like domain is found at 4 to 189 (ILVLYYSMYG…SIARYQGEYV (186 aa)). Residues 10 to 15 (SMYGHI) and 78 to 80 (TRF) contribute to the FMN site. Position 12 (Tyr12) interacts with NAD(+). A substrate-binding site is contributed by Trp98. Residues 113-118 (STGTGG) and His133 contribute to the FMN site.

It belongs to the WrbA family. The cofactor is FMN.

The enzyme catalyses a quinone + NADH + H(+) = a quinol + NAD(+). It catalyses the reaction a quinone + NADPH + H(+) = a quinol + NADP(+). This Salmonella paratyphi A (strain ATCC 9150 / SARB42) protein is NAD(P)H dehydrogenase (quinone).